A 609-amino-acid chain; its full sequence is Pogo transposable element with KRAB domain (609 aa).

Disordered regions lie at residues 1–28 (MESTAYPLNLSLKEEEEEEEIQSRELED) and 100–127 (EGEEESQNSDEWQLQGGTSAENEESDVK). Residues 8–28 (LNLSLKEEEEEEEIQSRELED) are a coiled coil. K13 participates in a covalent cross-link: Glycyl lysine isopeptide (Lys-Gly) (interchain with G-Cter in SUMO2). The region spanning 47–118 (ALFDEVAIYF…DEWQLQGGTS (72 aa)) is the KRAB domain. Polar residues predominate over residues 108–119 (SDEWQLQGGTSA). Positions 250–323 (AFRGPKNGRF…MRRYDLSLRH (74 aa)) constitute an HTH CENPB-type domain. The region spanning 353–567 (HDYEVAQMGN…ISSESIVQGF (215 aa)) is the DDE-1 domain. K384 is covalently cross-linked (Glycyl lysine isopeptide (Lys-Gly) (interchain with G-Cter in SUMO2)). The disordered stretch occupies residues 588–609 (SELPGGGEPPKDCDTESMAESN).

The protein localises to the nucleus. The sequence is that of Pogo transposable element with KRAB domain (POGK) from Homo sapiens (Human).